Consider the following 1104-residue polypeptide: Inhibitory regulator protein BUD2/CLA2 (1104 aa).

Ser-2 carries the N-acetylserine modification. The region spanning 316–444 (RSEYLSITGS…RYNKETRLPI (129 aa)) is the C2 domain. One can recognise a Ras-GAP domain in the interval 536 to 753 (AKIDGTVSRI…NDLLDYIDKM (218 aa)). Position 854 is a phosphoserine (Ser-854). The interval 1027-1104 (NPKSSNKTSV…FKKKKETGGS (78 aa)) is disordered. 2 stretches are compositionally biased toward polar residues: residues 1029 to 1043 (KSSNKTSVHGTSSEN) and 1052 to 1069 (LPNSQGKGNLGNRFSPTK). The segment covering 1090 to 1104 (KLTRWFKKKKETGGS) has biased composition (basic residues).

Stimulates the GTPase activity of BUD1/RSR1. Participates in the regulation of bud-site selection. The polypeptide is Inhibitory regulator protein BUD2/CLA2 (BUD2) (Saccharomyces cerevisiae (strain ATCC 204508 / S288c) (Baker's yeast)).